A 334-amino-acid chain; its full sequence is Beta-hexosaminidase (334 aa).

Residues aspartate 62, arginine 70, arginine 130, and 160 to 161 contribute to the substrate site; that span reads KH. The active-site Proton donor/acceptor is histidine 173. Catalysis depends on aspartate 243, which acts as the Nucleophile.

This sequence belongs to the glycosyl hydrolase 3 family. NagZ subfamily.

It is found in the cytoplasm. The catalysed reaction is Hydrolysis of terminal non-reducing N-acetyl-D-hexosamine residues in N-acetyl-beta-D-hexosaminides.. It participates in cell wall biogenesis; peptidoglycan recycling. Plays a role in peptidoglycan recycling by cleaving the terminal beta-1,4-linked N-acetylglucosamine (GlcNAc) from peptide-linked peptidoglycan fragments, giving rise to free GlcNAc, anhydro-N-acetylmuramic acid and anhydro-N-acetylmuramic acid-linked peptides. This chain is Beta-hexosaminidase, found in Photobacterium profundum (strain SS9).